A 63-amino-acid polypeptide reads, in one-letter code: MKAQELREKSVEELKTELLNLLREQFNLRMQAASGQLQQSHLLKQVRHNIARVKTLLTEKAGA.

The protein belongs to the universal ribosomal protein uL29 family.

This is Large ribosomal subunit protein uL29 from Photorhabdus laumondii subsp. laumondii (strain DSM 15139 / CIP 105565 / TT01) (Photorhabdus luminescens subsp. laumondii).